We begin with the raw amino-acid sequence, 437 residues long: Nuclear envelope integral membrane protein 1 (437 aa).

The signal sequence occupies residues 1–44 (MAGGIKVSVWSAVGPGPRCWGAGGGGGATWLLLVVAGCVVCGSA). Asn123 is a glycosylation site (N-linked (GlcNAc...) asparagine). Helical transmembrane passes span 159–179 (PKLF…DLLS), 183–203 (IFYY…IVIF), 214–234 (PIYV…QLVF), 244–264 (YWHY…AVCY), and 288–308 (GLMY…VIAL). The interval 184 to 295 (FYYSTGMSVG…GLGLMYSSIQ (112 aa)) is a; required for its colocalization with lamins at the nuclear envelope. The b; required for interaction with RAN-GTP stretch occupies residues 334–403 (PVPPRLLTEE…LTPNEVSVHE (70 aa)). A required for nuclear localization region spans residues 334–437 (PVPPRLLTEE…PTFTQNNFLT (104 aa)). A phosphoserine mark is found at Ser366, Ser419, and Ser420. Residues 415–425 (DEELSSEEEGS) show a composition bias toward acidic residues. Residues 415–437 (DEELSSEEEGSEYPTFTQNNFLT) form a disordered region. Residues 428–437 (PTFTQNNFLT) show a composition bias toward polar residues.

It belongs to the NEMP family. In terms of assembly, homooligomer. Interacts with RAN-GTP. Interacts with EMD. Post-translationally, phosphorylated. Phosphorylation may regulate its interaction with RAN-GTP. In terms of tissue distribution, in the ovary, expression is strongest in primordial follicle oocytes and rapidly declines as oocytes mature and move from the cortex (at protein level).

It localises to the nucleus inner membrane. Its subcellular location is the nucleus envelope. Its function is as follows. Together with EMD, contributes to nuclear envelope stiffness in germ cells. Required for female fertility. Essential for normal erythropoiesis. Required for efficient nuclear envelope opening and enucleation during the late stages of erythroblast maturation. The sequence is that of Nuclear envelope integral membrane protein 1 (Nemp1) from Mus musculus (Mouse).